Here is a 298-residue protein sequence, read N- to C-terminus: MSQARIIDGKAFAARLREQVAAEVAVLKAEHGLTPGLAVVLVGEDPASQVYVRNKGEQTLAAGMHSETHRLPANASQAELLSLVDRLNDDPAIHGVLVQFPVPDHLSQAAIVAAISPDKDVDGLTVVNAGRLASGLPALTSCTPAGCMVLLRDVVGDLTGKRAVVIGRSNLMGKPMAQLLLAADCTVTIAHSRSRDLPAICREADILVAAVGRAEMVRGDWIKPGATVIDVGISRFPSRDPVAAAAGKTRLVGDVAFDEAKEVAGAITPVPGGVGPMTIAMLLANTVSAAKRLNGIAE.

NADP(+) is bound by residues glycine 167–serine 169, serine 192, and isoleucine 233.

This sequence belongs to the tetrahydrofolate dehydrogenase/cyclohydrolase family. In terms of assembly, homodimer.

It catalyses the reaction (6R)-5,10-methylene-5,6,7,8-tetrahydrofolate + NADP(+) = (6R)-5,10-methenyltetrahydrofolate + NADPH. The enzyme catalyses (6R)-5,10-methenyltetrahydrofolate + H2O = (6R)-10-formyltetrahydrofolate + H(+). Its pathway is one-carbon metabolism; tetrahydrofolate interconversion. Catalyzes the oxidation of 5,10-methylenetetrahydrofolate to 5,10-methenyltetrahydrofolate and then the hydrolysis of 5,10-methenyltetrahydrofolate to 10-formyltetrahydrofolate. This Caulobacter sp. (strain K31) protein is Bifunctional protein FolD.